Consider the following 38-residue polypeptide: Large ribosomal subunit protein bL36 (38 aa).

The protein belongs to the bacterial ribosomal protein bL36 family.

The protein is Large ribosomal subunit protein bL36 of Psychrobacter cryohalolentis (strain ATCC BAA-1226 / DSM 17306 / VKM B-2378 / K5).